Reading from the N-terminus, the 533-residue chain is Death domain-containing ATP nucleosidase (533 aa).

Positions 1–262 (MDAAAIISLL…TAAGKEEKVS (262 aa)) are death domain. Residues 184–248 (STFVSDDATQ…TQTSTNSFNS (65 aa)) form a disordered region. Polar residues predominate over residues 218–227 (PSAQVNQPPT). The span at 236 to 248 (SGSTQTSTNSFNS) shows a compositional bias: low complexity. The segment at 263–533 (DDVTKGIKFL…HLDDDRTIHM (271 aa)) is purine nucleoside phosphorylase domain.

The catalysed reaction is ATP + H2O = D-ribose 5-triphosphate + adenine. It catalyses the reaction dATP + H2O = 2-deoxyribose 5-triphosphate + adenine. The C-terminal purine nucleoside phosphorylase (PNP) domain cleaves the N-glycosidic bond of ATP, and to a lesser extent dATP, to release adenine and a sugar triphosphate; has weak activity on ADP and AMP and no activity on dADP, dAMP, adenosine, deoxyadenosine or other (d)NTPs. The polypeptide is Death domain-containing ATP nucleosidase (109585858) (Amphimedon queenslandica (Sponge)).